An 877-amino-acid chain; its full sequence is Alanine--tRNA ligase (877 aa).

Residues His-567, His-571, Cys-669, and His-673 each contribute to the Zn(2+) site.

The protein belongs to the class-II aminoacyl-tRNA synthetase family. It depends on Zn(2+) as a cofactor.

It is found in the cytoplasm. The enzyme catalyses tRNA(Ala) + L-alanine + ATP = L-alanyl-tRNA(Ala) + AMP + diphosphate. Its function is as follows. Catalyzes the attachment of alanine to tRNA(Ala) in a two-step reaction: alanine is first activated by ATP to form Ala-AMP and then transferred to the acceptor end of tRNA(Ala). Also edits incorrectly charged Ser-tRNA(Ala) and Gly-tRNA(Ala) via its editing domain. This is Alanine--tRNA ligase from Rickettsia typhi (strain ATCC VR-144 / Wilmington).